The sequence spans 488 residues: uncharacterized protein (488 aa).

It belongs to the IIV-6 467R family.

This is an uncharacterized protein from Invertebrate iridescent virus 3 (IIV-3).